Reading from the N-terminus, the 232-residue chain is Octanoyltransferase (232 aa).

A BPL/LPL catalytic domain is found at 32–219 (NIIYDTLILL…SFKVFNFSSY (188 aa)). Substrate is bound by residues 77-84 (RGGDITYH), 140-142 (AIG), and 153-155 (GFA). Cysteine 171 acts as the Acyl-thioester intermediate in catalysis.

It belongs to the LipB family.

Its subcellular location is the cytoplasm. It carries out the reaction octanoyl-[ACP] + L-lysyl-[protein] = N(6)-octanoyl-L-lysyl-[protein] + holo-[ACP] + H(+). It functions in the pathway protein modification; protein lipoylation via endogenous pathway; protein N(6)-(lipoyl)lysine from octanoyl-[acyl-carrier-protein]: step 1/2. In terms of biological role, catalyzes the transfer of endogenously produced octanoic acid from octanoyl-acyl-carrier-protein onto the lipoyl domains of lipoate-dependent enzymes. Lipoyl-ACP can also act as a substrate although octanoyl-ACP is likely to be the physiological substrate. The polypeptide is Octanoyltransferase (Dictyoglomus turgidum (strain DSM 6724 / Z-1310)).